A 342-amino-acid polypeptide reads, in one-letter code: Nicotinate-nucleotide--dimethylbenzimidazole phosphoribosyltransferase (342 aa).

Glu311 acts as the Proton acceptor in catalysis.

The protein belongs to the CobT family.

The catalysed reaction is 5,6-dimethylbenzimidazole + nicotinate beta-D-ribonucleotide = alpha-ribazole 5'-phosphate + nicotinate + H(+). It functions in the pathway nucleoside biosynthesis; alpha-ribazole biosynthesis; alpha-ribazole from 5,6-dimethylbenzimidazole: step 1/2. Its function is as follows. Catalyzes the synthesis of alpha-ribazole-5'-phosphate from nicotinate mononucleotide (NAMN) and 5,6-dimethylbenzimidazole (DMB). The protein is Nicotinate-nucleotide--dimethylbenzimidazole phosphoribosyltransferase of Shewanella sediminis (strain HAW-EB3).